Here is a 609-residue protein sequence, read N- to C-terminus: UvrABC system protein C (609 aa).

The GIY-YIG domain maps to 16 to 94 (SSAGVYRMYD…IKQYMPKYNV (79 aa)). Positions 203–238 (QQVISTLVAKMEQAAQQQEYEQAARFRDQIMALRKV) constitute a UVR domain.

It belongs to the UvrC family. Interacts with UvrB in an incision complex.

The protein localises to the cytoplasm. The UvrABC repair system catalyzes the recognition and processing of DNA lesions. UvrC both incises the 5' and 3' sides of the lesion. The N-terminal half is responsible for the 3' incision and the C-terminal half is responsible for the 5' incision. The sequence is that of UvrABC system protein C from Shewanella putrefaciens (strain CN-32 / ATCC BAA-453).